The primary structure comprises 274 residues: NH(3)-dependent NAD(+) synthetase (274 aa).

46–53 is a binding site for ATP; it reads GISGGQDS. Residue Asp-52 coordinates Mg(2+). Arg-140 serves as a coordination point for deamido-NAD(+). Thr-160 is an ATP binding site. Glu-165 contributes to the Mg(2+) binding site. 2 residues coordinate deamido-NAD(+): Lys-173 and Asp-180. 2 residues coordinate ATP: Lys-189 and Thr-211. 260-261 contacts deamido-NAD(+); the sequence is HK.

The protein belongs to the NAD synthetase family. Homodimer.

It catalyses the reaction deamido-NAD(+) + NH4(+) + ATP = AMP + diphosphate + NAD(+) + H(+). The protein operates within cofactor biosynthesis; NAD(+) biosynthesis; NAD(+) from deamido-NAD(+) (ammonia route): step 1/1. In terms of biological role, catalyzes the ATP-dependent amidation of deamido-NAD to form NAD. Uses ammonia as a nitrogen source. The polypeptide is NH(3)-dependent NAD(+) synthetase (Streptococcus pneumoniae serotype 19F (strain G54)).